The sequence spans 156 residues: Small ribosomal subunit protein uS7 (156 aa).

This sequence belongs to the universal ribosomal protein uS7 family. As to quaternary structure, part of the 30S ribosomal subunit. Contacts proteins S9 and S11.

One of the primary rRNA binding proteins, it binds directly to 16S rRNA where it nucleates assembly of the head domain of the 30S subunit. Is located at the subunit interface close to the decoding center, probably blocks exit of the E-site tRNA. The polypeptide is Small ribosomal subunit protein uS7 (Pasteurella multocida (strain Pm70)).